We begin with the raw amino-acid sequence, 305 residues long: Methionyl-tRNA formyltransferase (305 aa).

Residue 108 to 111 (SLLP) participates in (6S)-5,6,7,8-tetrahydrofolate binding.

This sequence belongs to the Fmt family.

It carries out the reaction L-methionyl-tRNA(fMet) + (6R)-10-formyltetrahydrofolate = N-formyl-L-methionyl-tRNA(fMet) + (6S)-5,6,7,8-tetrahydrofolate + H(+). Its function is as follows. Attaches a formyl group to the free amino group of methionyl-tRNA(fMet). The formyl group appears to play a dual role in the initiator identity of N-formylmethionyl-tRNA by promoting its recognition by IF2 and preventing the misappropriation of this tRNA by the elongation apparatus. The sequence is that of Methionyl-tRNA formyltransferase from Clavibacter michiganensis subsp. michiganensis (strain NCPPB 382).